Consider the following 159-residue polypeptide: Endoribonuclease YbeY (159 aa).

Zn(2+)-binding residues include H122, H126, and H132.

The protein belongs to the endoribonuclease YbeY family. It depends on Zn(2+) as a cofactor.

Its subcellular location is the cytoplasm. In terms of biological role, single strand-specific metallo-endoribonuclease involved in late-stage 70S ribosome quality control and in maturation of the 3' terminus of the 16S rRNA. The protein is Endoribonuclease YbeY of Roseiflexus castenholzii (strain DSM 13941 / HLO8).